Here is a 376-residue protein sequence, read N- to C-terminus: uncharacterized protein (376 aa).

Ser59 is modified (phosphoserine). Residues 139-367 form the Rho-GAP domain; sequence VAIEITVQRQ…CLIEHHNAIF (229 aa). Residues 307–338 form a disordered region; sequence RPSRSPKKSNDFETATPWDLLSDEGEGPDASS.

This is an uncharacterized protein from Arabidopsis thaliana (Mouse-ear cress).